The primary structure comprises 800 residues: DNA topoisomerase 4 subunit A (800 aa).

A Topo IIA-type catalytic domain is found at 31-495; it reads LPDVRDGLKP…EIEEIKIDKE (465 aa). Tyr-119 acts as the O-(5'-phospho-DNA)-tyrosine intermediate in catalysis.

This sequence belongs to the type II topoisomerase GyrA/ParC subunit family. ParC type 2 subfamily. In terms of assembly, heterotetramer composed of ParC and ParE.

The protein localises to the cell membrane. It carries out the reaction ATP-dependent breakage, passage and rejoining of double-stranded DNA.. Functionally, topoisomerase IV is essential for chromosome segregation. It relaxes supercoiled DNA. Performs the decatenation events required during the replication of a circular DNA molecule. The sequence is that of DNA topoisomerase 4 subunit A from Staphylococcus aureus (strain MSSA476).